A 466-amino-acid polypeptide reads, in one-letter code: 3-isopropylmalate dehydratase large subunit (466 aa).

Positions 349, 410, and 413 each coordinate [4Fe-4S] cluster.

The protein belongs to the aconitase/IPM isomerase family. LeuC type 1 subfamily. As to quaternary structure, heterodimer of LeuC and LeuD. It depends on [4Fe-4S] cluster as a cofactor.

It catalyses the reaction (2R,3S)-3-isopropylmalate = (2S)-2-isopropylmalate. It participates in amino-acid biosynthesis; L-leucine biosynthesis; L-leucine from 3-methyl-2-oxobutanoate: step 2/4. Catalyzes the isomerization between 2-isopropylmalate and 3-isopropylmalate, via the formation of 2-isopropylmaleate. This Ruthia magnifica subsp. Calyptogena magnifica protein is 3-isopropylmalate dehydratase large subunit.